A 429-amino-acid chain; its full sequence is Enolase (429 aa).

Gln167 is a (2R)-2-phosphoglycerate binding site. The active-site Proton donor is Glu209. 3 residues coordinate Mg(2+): Asp246, Glu289, and Asp316. (2R)-2-phosphoglycerate is bound by residues Lys341, Arg370, Ser371, and Lys392. Residue Lys341 is the Proton acceptor of the active site.

It belongs to the enolase family. In terms of assembly, component of the RNA degradosome, a multiprotein complex involved in RNA processing and mRNA degradation. The cofactor is Mg(2+).

The protein resides in the cytoplasm. Its subcellular location is the secreted. It localises to the cell surface. The catalysed reaction is (2R)-2-phosphoglycerate = phosphoenolpyruvate + H2O. It functions in the pathway carbohydrate degradation; glycolysis; pyruvate from D-glyceraldehyde 3-phosphate: step 4/5. In terms of biological role, catalyzes the reversible conversion of 2-phosphoglycerate (2-PG) into phosphoenolpyruvate (PEP). It is essential for the degradation of carbohydrates via glycolysis. The polypeptide is Enolase (Pseudomonas putida (strain ATCC 47054 / DSM 6125 / CFBP 8728 / NCIMB 11950 / KT2440)).